The chain runs to 543 residues: Telomerase Cajal body protein 1 homolog (543 aa).

Residues 95 to 128 (GRPKNAVESPHAGVPMETSLAAEEEANGDEEEES) are disordered. Acidic residues predominate over residues 116-127 (AEEEANGDEEEE). WD repeat units lie at residues 237–283 (PEGG…LRCS), 291–329 (DEVMAAISLAFSHDGEQIYAGYKRCIKIFDTSRPGRFCD), and 378–421 (GHKG…QPLV).

Belongs to the TCAB1 family.

Its subcellular location is the nucleus. The protein resides in the cajal body. In terms of biological role, RNA chaperone that plays a key role in Cajal body formation. Specifically recognizes and binds the Cajal body box (CAB box) present in both small Cajal body RNAs (scaRNAs). Probably acts by mediating localization of scaRNAs to Cajal bodies. This is Telomerase Cajal body protein 1 homolog from Drosophila melanogaster (Fruit fly).